A 184-amino-acid polypeptide reads, in one-letter code: CASP-like protein 1U2 (184 aa).

Residues M1–K16 lie on the Cytoplasmic side of the membrane. Residues A17–M37 form a helical membrane-spanning segment. At A38 to P62 the chain is on the extracellular side. Residues F63–L83 traverse the membrane as a helical segment. The Cytoplasmic segment spans residues R84–K100. The chain crosses the membrane as a helical span at residues L101–T121. Residues G122 to K153 are Extracellular-facing. A helical membrane pass occupies residues L154–L174. Residues P175–D184 are Cytoplasmic-facing.

This sequence belongs to the Casparian strip membrane proteins (CASP) family. In terms of assembly, homodimer and heterodimers.

It is found in the cell membrane. The chain is CASP-like protein 1U2 from Oryza sativa subsp. japonica (Rice).